The following is a 258-amino-acid chain: Exu regulon transcriptional regulator (258 aa).

Residues 7-75 (RRLYQQLAAD…KGSGIHVVSN (69 aa)) form the HTH gntR-type domain. Positions 35–54 (ERFIADEKNVSRTVVREAII) form a DNA-binding region, H-T-H motif.

Its function is as follows. Repressor for the exu regulon that encode genes involved in hexuronate utilization. It regulates the ExuT, UxaCA and UxuRAB operons. Binds D-tagaturonate and D-fructuronate as inducers. This Escherichia coli O157:H7 protein is Exu regulon transcriptional regulator (exuR).